The primary structure comprises 347 residues: Quinolinate synthase (347 aa).

Iminosuccinate contacts are provided by His47 and Ser68. Cys113 is a [4Fe-4S] cluster binding site. Residues 139–141 (YAN) and Ser156 each bind iminosuccinate. Cys200 provides a ligand contact to [4Fe-4S] cluster. Residues 226 to 228 (HPE) and Thr243 each bind iminosuccinate. Residue Cys297 participates in [4Fe-4S] cluster binding.

The protein belongs to the quinolinate synthase family. Type 1 subfamily. Requires [4Fe-4S] cluster as cofactor.

Its subcellular location is the cytoplasm. The catalysed reaction is iminosuccinate + dihydroxyacetone phosphate = quinolinate + phosphate + 2 H2O + H(+). The protein operates within cofactor biosynthesis; NAD(+) biosynthesis; quinolinate from iminoaspartate: step 1/1. Its function is as follows. Catalyzes the condensation of iminoaspartate with dihydroxyacetone phosphate to form quinolinate. The sequence is that of Quinolinate synthase from Salmonella typhi.